The following is a 304-amino-acid chain: Urease accessory protein UreD (304 aa).

The protein belongs to the UreD family. UreD, UreF and UreG form a complex that acts as a GTP-hydrolysis-dependent molecular chaperone, activating the urease apoprotein by helping to assemble the nickel containing metallocenter of UreC. The UreE protein probably delivers the nickel.

It is found in the cytoplasm. Its function is as follows. Required for maturation of urease via the functional incorporation of the urease nickel metallocenter. This is Urease accessory protein UreD from Haloquadratum walsbyi (strain DSM 16790 / HBSQ001).